The primary structure comprises 171 residues: Crossover junction endodeoxyribonuclease RuvC (171 aa).

Active-site residues include Asp7, Glu74, and Asp147. Mg(2+)-binding residues include Asp7, Glu74, and Asp147.

This sequence belongs to the RuvC family. Homodimer which binds Holliday junction (HJ) DNA. The HJ becomes 2-fold symmetrical on binding to RuvC with unstacked arms; it has a different conformation from HJ DNA in complex with RuvA. In the full resolvosome a probable DNA-RuvA(4)-RuvB(12)-RuvC(2) complex forms which resolves the HJ. Mg(2+) is required as a cofactor.

The protein resides in the cytoplasm. The catalysed reaction is Endonucleolytic cleavage at a junction such as a reciprocal single-stranded crossover between two homologous DNA duplexes (Holliday junction).. In terms of biological role, the RuvA-RuvB-RuvC complex processes Holliday junction (HJ) DNA during genetic recombination and DNA repair. Endonuclease that resolves HJ intermediates. Cleaves cruciform DNA by making single-stranded nicks across the HJ at symmetrical positions within the homologous arms, yielding a 5'-phosphate and a 3'-hydroxyl group; requires a central core of homology in the junction. The consensus cleavage sequence is 5'-(A/T)TT(C/G)-3'. Cleavage occurs on the 3'-side of the TT dinucleotide at the point of strand exchange. HJ branch migration catalyzed by RuvA-RuvB allows RuvC to scan DNA until it finds its consensus sequence, where it cleaves and resolves the cruciform DNA. In Acidobacterium capsulatum (strain ATCC 51196 / DSM 11244 / BCRC 80197 / JCM 7670 / NBRC 15755 / NCIMB 13165 / 161), this protein is Crossover junction endodeoxyribonuclease RuvC.